The chain runs to 118 residues: Iron-sulfur cluster insertion protein ErpA (118 aa).

Residues cysteine 46, cysteine 110, and cysteine 112 each coordinate iron-sulfur cluster.

It belongs to the HesB/IscA family. Homodimer. Iron-sulfur cluster is required as a cofactor.

Required for insertion of 4Fe-4S clusters for at least IspG. The chain is Iron-sulfur cluster insertion protein ErpA from Psychromonas ingrahamii (strain DSM 17664 / CCUG 51855 / 37).